A 109-amino-acid polypeptide reads, in one-letter code: Immunity protein CdiI (109 aa).

As to quaternary structure, specifically interacts with cognate toxin CdiA, which inhibits the toxin.

Immunity protein component of a toxin-immunity protein module, which functions as a cellular contact-dependent growth inhibition (CDI) system. CDI modules allow bacteria to communicate with and inhibit the growth of closely related neighboring bacteria in a contact-dependent fashion. Neutralizes the toxic activity of cognate toxin CdiA (C-terminal 160 residue CT fragment) upon expression in E.coli. Does not inhibit toxic activity of CdiA from other strains of B.pseudomallei. This chain is Immunity protein CdiI (cdiI), found in Burkholderia pseudomallei (Pseudomonas pseudomallei).